Here is a 139-residue protein sequence, read N- to C-terminus: Histone H2B.11 (139 aa).

Residues 1-39 show a composition bias toward basic and acidic residues; the sequence is MAPKAEKKPAEKKPVEEKAEKKPKAEKRVPGAKEGGGEK. The interval 1–47 is disordered; the sequence is MAPKAEKKPAEKKPVEEKAEKKPKAEKRVPGAKEGGGEKKGKKKAKK. N6-acetyllysine is present on residues Lys-7 and Lys-27. Residue Lys-135 forms a Glycyl lysine isopeptide (Lys-Gly) (interchain with G-Cter in ubiquitin) linkage.

It belongs to the histone H2B family. In terms of assembly, the nucleosome is a histone octamer containing two molecules each of H2A, H2B, H3 and H4 assembled in one H3-H4 heterotetramer and two H2A-H2B heterodimers. The octamer wraps approximately 147 bp of DNA. Post-translationally, can be acetylated to form H2BK6ac and H2BK33ac. Monoubiquitinated by BRE1 to form H2BK143ub1 and deubiquitinated by UBP26. Required for heterochromatic histone H3 di- and trimethylation at H3K4me. May give a specific tag for epigenetic transcriptional activation.

Its subcellular location is the nucleus. The protein localises to the chromosome. Its function is as follows. Core component of nucleosome. Nucleosomes wrap and compact DNA into chromatin, limiting DNA accessibility to the cellular machineries which require DNA as a template. Histones thereby play a central role in transcription regulation, DNA repair, DNA replication and chromosomal stability. DNA accessibility is regulated via a complex set of post-translational modifications of histones, also called histone code, and nucleosome remodeling. The polypeptide is Histone H2B.11 (H2B.11) (Oryza sativa subsp. indica (Rice)).